Consider the following 323-residue polypeptide: Aldo-keto reductase family 1 member C1 (323 aa).

NADP(+) contacts are provided by residues 20–24 (GFGTY) and D50. A substrate-binding site is contributed by Y24. Y55 functions as the Proton donor in the catalytic mechanism. Position 117 (H117) interacts with substrate. Residues 166–167 (SN), Q190, and 216–222 (YSALGSH) each bind NADP(+). Substrate contacts are provided by H222 and W227. NADP(+) is bound at residue 270 to 280 (KSYNEQRIREN).

It belongs to the aldo/keto reductase family. Monomer. As to expression, expressed in liver, adrenal gland, intestine and kidney.

It localises to the cytoplasm. The protein localises to the cytosol. It carries out the reaction a 3alpha-hydroxysteroid + NADP(+) = a 3-oxosteroid + NADPH + H(+). It catalyses the reaction a 3alpha-hydroxysteroid + NAD(+) = a 3-oxosteroid + NADH + H(+). The enzyme catalyses (17R,20S)-17,20-dihydroxypregn-4-en-3-one + NADP(+) = 17alpha-hydroxyprogesterone + NADPH + H(+). The catalysed reaction is (17R,20S)-17,20-dihydroxypregn-4-en-3-one + NAD(+) = 17alpha-hydroxyprogesterone + NADH + H(+). It carries out the reaction (20S)-hydroxypregn-4-en-3-one + NADP(+) = progesterone + NADPH + H(+). It catalyses the reaction (20S)-hydroxypregn-4-en-3-one + NAD(+) = progesterone + NADH + H(+). The enzyme catalyses (1R,2R)-1,2-dihydrobenzene-1,2-diol + NADP(+) = catechol + NADPH + H(+). The catalysed reaction is (S)-indan-1-ol + NAD(+) = indan-1-one + NADH + H(+). It carries out the reaction (S)-indan-1-ol + NADP(+) = indan-1-one + NADPH + H(+). It catalyses the reaction 5alpha-androstane-3alpha,17beta-diol + NADP(+) = 17beta-hydroxy-5alpha-androstan-3-one + NADPH + H(+). The enzyme catalyses 5alpha-androstane-3beta,17beta-diol + NADP(+) = 17beta-hydroxy-5alpha-androstan-3-one + NADPH + H(+). The catalysed reaction is 5alpha-androstane-3alpha,17beta-diol + NAD(+) = 17beta-hydroxy-5alpha-androstan-3-one + NADH + H(+). It carries out the reaction 17beta-hydroxy-5alpha-androstan-3-one + NADP(+) = 5alpha-androstan-3,17-dione + NADPH + H(+). It catalyses the reaction androsterone + NADP(+) = 5alpha-androstan-3,17-dione + NADPH + H(+). The enzyme catalyses androsterone + NADPH + H(+) = 5alpha-androstane-3alpha,17beta-diol + NADP(+). The catalysed reaction is 5alpha-androstane-3alpha,17beta-diol + NAD(+) = androsterone + NADH + H(+). It carries out the reaction 17beta-estradiol + NADP(+) = estrone + NADPH + H(+). It catalyses the reaction 17beta-estradiol + NAD(+) = estrone + NADH + H(+). The enzyme catalyses testosterone + NADP(+) = androst-4-ene-3,17-dione + NADPH + H(+). The catalysed reaction is 20alpha-hydroxy-5beta-pregnan-3-one + NADP(+) = 5beta-pregnan-3,20-dione + NADPH + H(+). It carries out the reaction 3beta-hydroxy-5beta-pregnane-20-one + NADP(+) = 5beta-pregnan-3,20-dione + NADPH + H(+). It catalyses the reaction 3beta-hydroxy-5beta-pregnane-20-one + NADPH + H(+) = 3beta,20alpha-dihydroxy-5beta-pregnane + NADP(+). The enzyme catalyses (3beta,5alpha,17beta)-3-hydroxyandrostan-17-yl sulfate + NADP(+) = 5alpha-dihydrotestosterone sulfate + NADPH + H(+). It participates in steroid metabolism. Its function is as follows. Cytosolic aldo-keto reductase that catalyzes the NADH and NADPH-dependent reduction of ketosteroids to hydroxysteroids. Most probably acts as a reductase in vivo since the oxidase activity measured in vitro is inhibited by physiological concentrations of NADPH. Displays a broad positional specificity acting on positions 3, 17 and 20 of steroids and regulates the metabolism of hormones like estrogens and androgens. May also reduce conjugated steroids such as 5alpha-dihydrotestosterone sulfate. Displays affinity for bile acids. The protein is Aldo-keto reductase family 1 member C1 (AKR1C1) of Macaca fuscata fuscata (Japanese macaque).